The primary structure comprises 64 residues: Large ribosomal subunit protein bL32 (64 aa).

A disordered region spans residues Met1–Ala23.

It belongs to the bacterial ribosomal protein bL32 family.

The sequence is that of Large ribosomal subunit protein bL32 from Xylella fastidiosa (strain M23).